A 123-amino-acid chain; its full sequence is Small ribosomal subunit protein uS12 (123 aa).

3-methylthioaspartic acid is present on Asp-89. Residues 101–123 (TLDTQGVKDRRQRRSKYGAKRPK) are disordered. Residues 110 to 123 (RRQRRSKYGAKRPK) are compositionally biased toward basic residues.

This sequence belongs to the universal ribosomal protein uS12 family. In terms of assembly, part of the 30S ribosomal subunit. Contacts proteins S8 and S17. May interact with IF1 in the 30S initiation complex.

Its function is as follows. With S4 and S5 plays an important role in translational accuracy. Functionally, interacts with and stabilizes bases of the 16S rRNA that are involved in tRNA selection in the A site and with the mRNA backbone. Located at the interface of the 30S and 50S subunits, it traverses the body of the 30S subunit contacting proteins on the other side and probably holding the rRNA structure together. The combined cluster of proteins S8, S12 and S17 appears to hold together the shoulder and platform of the 30S subunit. This chain is Small ribosomal subunit protein uS12, found in Paramagnetospirillum magneticum (strain ATCC 700264 / AMB-1) (Magnetospirillum magneticum).